The sequence spans 54 residues: Ovomucoid (54 aa).

The Kazal-like domain occupies 4-54 (VDCSGYPQSACPQDYVPFCGSDNKTYSNKCNFCNAVADSNGTLTLSHFGKC). Intrachain disulfides connect Cys-6/Cys-36, Cys-14/Cys-33, and Cys-22/Cys-54. Asn-43 carries an N-linked (GlcNAc...) asparagine glycan.

It localises to the secreted. The chain is Ovomucoid from Gallirallus australis (Weka).